The primary structure comprises 302 residues: Dioxygenase olcK (302 aa).

Positions 136, 138, and 213 each coordinate Fe cation.

Belongs to the PhyH family. Homodimer. The cofactor is Fe cation.

The protein localises to the peroxisome matrix. It functions in the pathway secondary metabolite biosynthesis; terpenoid biosynthesis. In terms of biological role, dioxygenase; part of the gene cluster that mediates the biosynthesis of 15-deoxyoxalicine B. The first step of the pathway is the synthesis of nicotinyl-CoA from nicotinic acid by the nicotinic acid-CoA ligase olcI. Nicotinyl-CoA is then a substrate of polyketide synthase olcA to produce 4-hydroxy-6-(3-pyridinyl)-2H-pyran-2-one (HPPO) which is further prenylated by the polyprenyl transferase olcH to yield geranylgeranyl-HPPO. Geranylgeranyl pyrophosphate is provided by the cluster-specific geranylgeranyl pyrophosphate synthase olcC. The FAD-dependent monooxygenase olcE catalyzes the epoxidation of geranylgeranyl-HPPO and the terpene cyclase olcD catalyzes the cyclization of the terpenoid component, resulting in the formation of the tricyclic terpene moiety seen in predecaturin E. The cytochrome P450 monooxygenase then catalyzes the allylic oxidation of predecaturin E, which is followed by spirocylization with concomitant loss of one molecule of water to form decaturin E. Decaturin E is the substrate of the cytochrome P450 monooxygenase olcJ which hydroxylates it at the C-29 position to form decaturin F. The short-chain dehydrogenase/reductase olcF may catalyze the oxidation of decaturin F to generate the 29-hydroxyl-27-one intermediate, and subsequent hemiacetal formation probably leads to the formation of decaturin C. The dioxygenase olcK may be a peroxisomal enzyme that catalyzes the hydroxylation of decaturin C into decaturin A once decaturin C is shuttled into the peroxisome by the MFS transporter olcL. Finally the cytochrome P450 monooxygenase olcB catalyzes the oxidative rearrangement to yield 15-deoxyoxalicine B. In the absence of olcJ, decaturin E may be shunted to a pathway in which it is oxidized to a ketone, possibly by olcF, to form decaturin D, which undergoes further allylic oxidation to yield decaturin G. Moreover, in the absence of oclK or oclL, oclB can convert decaturin C into 15-deoxyoxalicine A. The polypeptide is Dioxygenase olcK (Penicillium canescens).